We begin with the raw amino-acid sequence, 83 residues long: Cytochrome b559 subunit alpha (83 aa).

The helical transmembrane segment at 21–35 threads the bilayer; the sequence is VIHSITIPSLFIAGW. His-23 serves as a coordination point for heme.

This sequence belongs to the PsbE/PsbF family. Heterodimer of an alpha subunit and a beta subunit. PSII is composed of 1 copy each of membrane proteins PsbA, PsbB, PsbC, PsbD, PsbE, PsbF, PsbH, PsbI, PsbJ, PsbK, PsbL, PsbM, PsbT, PsbX, PsbY, PsbZ, Psb30/Ycf12, at least 3 peripheral proteins of the oxygen-evolving complex and a large number of cofactors. It forms dimeric complexes. Heme b serves as cofactor.

Its subcellular location is the plastid. It is found in the chloroplast thylakoid membrane. Its function is as follows. This b-type cytochrome is tightly associated with the reaction center of photosystem II (PSII). PSII is a light-driven water:plastoquinone oxidoreductase that uses light energy to abstract electrons from H(2)O, generating O(2) and a proton gradient subsequently used for ATP formation. It consists of a core antenna complex that captures photons, and an electron transfer chain that converts photonic excitation into a charge separation. This chain is Cytochrome b559 subunit alpha, found in Staurastrum punctulatum (Green alga).